A 1441-amino-acid chain; its full sequence is Probable cleavage and polyadenylation specificity factor subunit 1 (1441 aa).

Belongs to the CPSF1 family. In terms of assembly, CPSF is a heterotetramer composed of four distinct subunits 160, 100, 70 and 30 kDa.

It is found in the nucleus. In terms of biological role, CPSF plays a key role in pre-mRNA 3'-end formation, recognizing the AAUAAA signal sequence and interacting with poly(A)polymerase and other factors to bring about cleavage and poly(A) addition. This subunit is involved in the RNA recognition step of the polyadenylation reaction. The protein is Probable cleavage and polyadenylation specificity factor subunit 1 of Oryza sativa subsp. japonica (Rice).